The following is a 181-amino-acid chain: Protein CENTRORADIALIS (181 aa).

It belongs to the phosphatidylethanolamine-binding protein family. In terms of assembly, may form homodimers in solution.

The protein resides in the cytoplasm. Its function is as follows. Expression of CEN leads to a morphological switch between shoot growth and the development of flower structures (inflorescence). May form complexes with phosphorylated ligands by interfering with kinases and their effectors. This chain is Protein CENTRORADIALIS (CEN), found in Antirrhinum majus (Garden snapdragon).